A 138-amino-acid polypeptide reads, in one-letter code: Cysteine desulfuration protein SufE (138 aa).

C51 functions as the Cysteine persulfide intermediate in the catalytic mechanism.

Belongs to the SufE family. As to quaternary structure, homodimer. Interacts with SufS.

It localises to the cytoplasm. It functions in the pathway cofactor biosynthesis; iron-sulfur cluster biosynthesis. Participates in cysteine desulfuration mediated by SufS. Cysteine desulfuration mobilizes sulfur from L-cysteine to yield L-alanine and constitutes an essential step in sulfur metabolism for biosynthesis of a variety of sulfur-containing biomolecules. Functions as a sulfur acceptor for SufS, by mediating the direct transfer of the sulfur atom from the S-sulfanylcysteine of SufS, an intermediate product of cysteine desulfuration process. The protein is Cysteine desulfuration protein SufE of Escherichia coli O6:K15:H31 (strain 536 / UPEC).